Here is a 432-residue protein sequence, read N- to C-terminus: UDP-N-acetylglucosamine 1-carboxyvinyltransferase (432 aa).

Lys-22–Asn-23 provides a ligand contact to phosphoenolpyruvate. Arg-96 provides a ligand contact to UDP-N-acetyl-alpha-D-glucosamine. Residue Cys-120 is the Proton donor of the active site. Cys-120 is subject to 2-(S-cysteinyl)pyruvic acid O-phosphothioketal. Residues Arg-125–Leu-129, Asp-310, and Ile-332 contribute to the UDP-N-acetyl-alpha-D-glucosamine site.

The protein belongs to the EPSP synthase family. MurA subfamily.

It is found in the cytoplasm. The catalysed reaction is phosphoenolpyruvate + UDP-N-acetyl-alpha-D-glucosamine = UDP-N-acetyl-3-O-(1-carboxyvinyl)-alpha-D-glucosamine + phosphate. It functions in the pathway cell wall biogenesis; peptidoglycan biosynthesis. Its function is as follows. Cell wall formation. Adds enolpyruvyl to UDP-N-acetylglucosamine. The protein is UDP-N-acetylglucosamine 1-carboxyvinyltransferase of Caulobacter sp. (strain K31).